We begin with the raw amino-acid sequence, 314 residues long: Lipoyl synthase (314 aa).

[4Fe-4S] cluster is bound by residues Cys67, Cys72, Cys78, Cys93, Cys97, Cys100, and Ser306. Residues 79 to 295 (FNRGTATFMI…KNYALSIGFK (217 aa)) enclose the Radical SAM core domain.

Belongs to the radical SAM superfamily. Lipoyl synthase family. It depends on [4Fe-4S] cluster as a cofactor.

It is found in the cytoplasm. The catalysed reaction is [[Fe-S] cluster scaffold protein carrying a second [4Fe-4S](2+) cluster] + N(6)-octanoyl-L-lysyl-[protein] + 2 oxidized [2Fe-2S]-[ferredoxin] + 2 S-adenosyl-L-methionine + 4 H(+) = [[Fe-S] cluster scaffold protein] + N(6)-[(R)-dihydrolipoyl]-L-lysyl-[protein] + 4 Fe(3+) + 2 hydrogen sulfide + 2 5'-deoxyadenosine + 2 L-methionine + 2 reduced [2Fe-2S]-[ferredoxin]. Its pathway is protein modification; protein lipoylation via endogenous pathway; protein N(6)-(lipoyl)lysine from octanoyl-[acyl-carrier-protein]: step 2/2. Its function is as follows. Catalyzes the radical-mediated insertion of two sulfur atoms into the C-6 and C-8 positions of the octanoyl moiety bound to the lipoyl domains of lipoate-dependent enzymes, thereby converting the octanoylated domains into lipoylated derivatives. This Buchnera aphidicola subsp. Baizongia pistaciae (strain Bp) protein is Lipoyl synthase.